We begin with the raw amino-acid sequence, 107 residues long: U1-lycotoxin-Ls1f (107 aa).

Residues 1-20 (MMKVLVVVALLVTLISYSSS) form the signal peptide. Residues 21–41 (EGIDDLEADELLSLMANEQTR) constitute a propeptide that is removed on maturation. Disulfide bonds link C44/C59, C51/C68, C58/C86, and C70/C84.

It belongs to the neurotoxin 19 (CSTX) family. 04 (U1-Lctx) subfamily. In terms of tissue distribution, expressed by the venom gland.

The protein resides in the secreted. The protein is U1-lycotoxin-Ls1f of Lycosa singoriensis (Wolf spider).